Consider the following 237-residue polypeptide: Phosphatidylserine decarboxylase proenzyme (237 aa).

Ser206 acts as the Schiff-base intermediate with substrate; via pyruvic acid in catalysis. Pyruvic acid (Ser); by autocatalysis is present on Ser206.

The protein belongs to the phosphatidylserine decarboxylase family. PSD-A subfamily. As to quaternary structure, heterodimer of a large membrane-associated beta subunit and a small pyruvoyl-containing alpha subunit. It depends on pyruvate as a cofactor. Is synthesized initially as an inactive proenzyme. Formation of the active enzyme involves a self-maturation process in which the active site pyruvoyl group is generated from an internal serine residue via an autocatalytic post-translational modification. Two non-identical subunits are generated from the proenzyme in this reaction, and the pyruvate is formed at the N-terminus of the alpha chain, which is derived from the carboxyl end of the proenzyme. The post-translation cleavage follows an unusual pathway, termed non-hydrolytic serinolysis, in which the side chain hydroxyl group of the serine supplies its oxygen atom to form the C-terminus of the beta chain, while the remainder of the serine residue undergoes an oxidative deamination to produce ammonia and the pyruvoyl prosthetic group on the alpha chain.

The protein resides in the cell membrane. It catalyses the reaction a 1,2-diacyl-sn-glycero-3-phospho-L-serine + H(+) = a 1,2-diacyl-sn-glycero-3-phosphoethanolamine + CO2. It participates in phospholipid metabolism; phosphatidylethanolamine biosynthesis; phosphatidylethanolamine from CDP-diacylglycerol: step 2/2. Its function is as follows. Catalyzes the formation of phosphatidylethanolamine (PtdEtn) from phosphatidylserine (PtdSer). The protein is Phosphatidylserine decarboxylase proenzyme of Nocardia farcinica (strain IFM 10152).